The sequence spans 353 residues: Phosphate acyltransferase (353 aa).

Belongs to the PlsX family. Homodimer. Probably interacts with PlsY.

The protein localises to the cytoplasm. The enzyme catalyses a fatty acyl-[ACP] + phosphate = an acyl phosphate + holo-[ACP]. The protein operates within lipid metabolism; phospholipid metabolism. In terms of biological role, catalyzes the reversible formation of acyl-phosphate (acyl-PO(4)) from acyl-[acyl-carrier-protein] (acyl-ACP). This enzyme utilizes acyl-ACP as fatty acyl donor, but not acyl-CoA. In Myxococcus xanthus (strain DK1622), this protein is Phosphate acyltransferase.